The following is a 778-amino-acid chain: MNKKILETLEFDKVKALFEPHLLTEQGLEQLRQLAPTAKADKIKQAFAEMKEMQALFVEQPHFTILSTKEIAGVCKRLEMGADLNIEEFLLLKRVLLASRELQNFYANLENVSLEELALWFEKLHDFPQLQGNLQAFNDAGFIENFASEELARIRRKIHDSESQVRDVLQDLLKQKAQMLTEGIVASRNGRQVLPVKNTYRNKIAGVVHDISASGNTVYIEPREVVKLSEEIASLRADERYEMLRILQEISERVRPHAAEIANDAWIIGHLDLIRAKVRFIQERQAVVPQLSENQEIQLLHVCHPLVKNAVANDVYFGQDLTAIVITGPNTGGKTIMLKTLGLTQVMAQSGLPILADKGSRVGIFEEIFADIGDEQSIEQSLSTFSSHMTNIVDILGKVNQHSLLLLDELGAGTDPQEGAALAMAILEDLRLRQIKTMATTHYPELKAYGIETAFVQNASMEFDTATLRPTYRFMQGVPGRSNAFEIAKRLGLSEVIVGDASQQIDQDNDVNRIIEQLEEQTLESRKRLDNIREVEQENLKMNRALKKLYNELNREKETELNKAREQAAEIVDMALSESDQILKNLHSKSQLKPHEIIEAKAKLKKLAPEKVDLSKNKVLQKAKKKRAPKVGDDIVVLSYGQRGTLTSQLKDGRWEAQVGLIKMTLEEKEFDLVQAQQEKPVKKKQVNVVKRTSGRGPQARLDLRGKRYEEAMNELDTFIDQALLNNMAQVDIIHGIGTGVIREGVTKYLQRNKHVKSFGYAPQNAGGSGATIVTFKG.

328 to 335 (GPNTGGKT) provides a ligand contact to ATP. Residues 702–777 (LDLRGKRYEE…GSGATIVTFK (76 aa)) enclose the Smr domain.

It belongs to the DNA mismatch repair MutS family. MutS2 subfamily. As to quaternary structure, homodimer. Binds to stalled ribosomes, contacting rRNA.

In terms of biological role, endonuclease that is involved in the suppression of homologous recombination and thus may have a key role in the control of bacterial genetic diversity. Its function is as follows. Acts as a ribosome collision sensor, splitting the ribosome into its 2 subunits. Detects stalled/collided 70S ribosomes which it binds and splits by an ATP-hydrolysis driven conformational change. Acts upstream of the ribosome quality control system (RQC), a ribosome-associated complex that mediates the extraction of incompletely synthesized nascent chains from stalled ribosomes and their subsequent degradation. Probably generates substrates for RQC. This chain is Endonuclease MutS2, found in Streptococcus pneumoniae (strain P1031).